We begin with the raw amino-acid sequence, 245 residues long: Thiopurine S-methyltransferase (245 aa).

29–40 (WQEKWVNHKTGF) serves as a coordination point for S-adenosyl-L-methionine. A substrate-binding site is contributed by Phe-40. Lys-58 is modified (N6-acetyllysine). 3 residues coordinate S-adenosyl-L-methionine: Leu-69, Glu-90, and Arg-152.

It belongs to the class I-like SAM-binding methyltransferase superfamily. TPMT family. As to quaternary structure, monomer.

It localises to the cytoplasm. The catalysed reaction is S-adenosyl-L-methionine + a thiopurine = S-adenosyl-L-homocysteine + a thiopurine S-methylether.. This chain is Thiopurine S-methyltransferase (TPMT), found in Bos taurus (Bovine).